A 166-amino-acid chain; its full sequence is UPF0254 protein Maeo_0668 (166 aa).

This sequence belongs to the UPF0254 family.

This chain is UPF0254 protein Maeo_0668, found in Methanococcus aeolicus (strain ATCC BAA-1280 / DSM 17508 / OCM 812 / Nankai-3).